The following is a 215-amino-acid chain: Reticulon-like protein B14 (215 aa).

The Reticulon domain maps to 31 to 211; it reads FADIMFWKNK…NKIPKAQAKT (181 aa). The next 3 membrane-spanning stretches (helical) occupy residues 41 to 61, 62 to 82, and 141 to 161; these read KESG…EVVE, YPFI…FLIW, and LWIL…YIVF.

It is found in the endoplasmic reticulum membrane. The sequence is that of Reticulon-like protein B14 (RTNLB14) from Arabidopsis thaliana (Mouse-ear cress).